A 1253-amino-acid chain; its full sequence is Elongator complex protein 1 (1253 aa).

Residues 830–1253 are mediates dimerization; it reads VDVNMLFDHA…KPFEKLSILI (424 aa). Over residues 1126 to 1141 the composition is skewed to polar residues; that stretch reads YTKSSNSSKMTRNTSK. The disordered stretch occupies residues 1126-1153; the sequence is YTKSSNSSKMTRNTSKNNRRLERKRARG. Residues 1137 to 1155 are required for binding to tRNA; that stretch reads RNTSKNNRRLERKRARGKK. A compositionally biased stretch (basic residues) spans 1142–1153; that stretch reads NNRRLERKRARG.

Belongs to the ELP1/IKA1 family. Homodimer. Component of the elongator complex.

It localises to the cytoplasm. It participates in tRNA modification; 5-methoxycarbonylmethyl-2-thiouridine-tRNA biosynthesis. Functionally, component of the elongator complex, a multiprotein complex which is required for multiple tRNA modifications, including mcm5U (5-methoxycarbonylmethyl uridine), mcm5s2U (5-methoxycarbonylmethyl-2-thiouridine), and ncm5U (5-carbamoylmethyl uridine). The elongator complex catalyzes formation of carboxymethyluridine in the wobble base at position 34 in tRNAs. ELP1 binds to tRNA, mediating interaction of the elongator complex with tRNA. The polypeptide is Elongator complex protein 1 (Schizosaccharomyces pombe (strain 972 / ATCC 24843) (Fission yeast)).